The chain runs to 456 residues: DnaJ homolog dnj-10 (456 aa).

In terms of domain architecture, J spans 44–108 (DYYKTLGVDK…TKRQEYDAYG (65 aa)). A CR-type zinc finger spans residues 178–257 (GATKNVSVNV…CEGEGQTVQR (80 aa)). CXXCXGXG motif repeat units lie at residues 208-215 (CPYCNGTG), 231-238 (CNRCRGSG), and 245-252 (CQECEGEG). The segment covering 395–429 (KGLEKNQKTEEKETKKNEEKKSEGASESQKRRSEP) has biased composition (basic and acidic residues). A disordered region spans residues 395 to 443 (KGLEKNQKTEEKETKKNEEKKSEGASESQKRRSEPVAENAETIDENQEN).

The chain is DnaJ homolog dnj-10 (dnj-10) from Caenorhabditis elegans.